Reading from the N-terminus, the 1002-residue chain is Golgin subfamily A member 2 (1002 aa).

The span at 1-11 shows a compositional bias: pro residues; that stretch reads MWPQPRLPPRP. The interaction with p115/USO1 stretch occupies residues 1-84; sequence MWPQPRLPPR…AATLQPSDDT (84 aa). The interval 1–107 is disordered; it reads MWPQPRLPPR…TSMAASQNHD (107 aa). Residues 16–892 are a coiled coil; it reads ETRQSKLAAA…LELQELVLRL (877 aa). 3 positions are modified to dimethylated arginine: Arg18, Arg30, and Arg35. The Nuclear localization signal signature appears at 26 to 49; that stretch reads KKKLREYQQRNSPGVPTGAKKKKK. Ser37 carries the phosphoserine modification. The span at 52–63 shows a compositional bias: polar residues; that stretch reads NGSNPETTTSGG. Ser66 carries the phosphoserine modification. Polar residues predominate over residues 95–105; it reads ASLTSMAASQN. A phosphoserine mark is found at Ser273, Ser438, and Ser690. The tract at residues 694–724 is disordered; sequence HPGEGDGLDREEEEDEEEEEEEAVAVPQPMP. Positions 702–716 are enriched in acidic residues; that stretch reads DREEEEDEEEEEEEA. Phosphoserine occurs at positions 937, 953, and 981. The interval 992 to 1002 is interaction with GORASP1/GRASP65; the sequence is DENDEVKITVI.

The protein belongs to the GOLGA2 family. In terms of assembly, homodimer, may assemble into homohexamers. Homotetramer; forms a parallel homotetramer with a flexible rod-like structure that can give rise to I- and Y-shaped conformations. Interacts with GORASP1/GRASP65. The homooligomer forms a complex with GORASP1 with a 1:1 stoichiometry. Interacts with RAB1B that has been activated by GTP-binding. Interacts with p115/USO1; interaction with p115/USO1 inhibits interaction with STX5 and/or RAB1B. Interacts with STX5. Interacts with ZFPL1. Interacts with AKAP450/AKAP9; leading to recruit AKAP450/AKAP9 to the cis-Golgi. Cleaved by caspases at the onset of apoptosis. In terms of processing, methylation by PRMT5 is required for Golgi ribbon formation. While dimethylation at Arg-30 and Arg-35 are confirmed in vivo, it is unclear whether Arg-18 is methylated in vivo. Post-translationally, phosphorylated at Ser-37 by CDK1 at the onset of mitosis, inhibiting the interaction with p115/USO1 and triggering Golgi disassembly. Phosphorylated at Ser-37 in prophase as the Golgi complex starts to break down, and remains phosphorylated during further breakdown and partitioning of the Golgi fragments in metaphase and anaphase. In telophase, GM130 is dephosphorylated by PP2A as the Golgi fragments start to reassemble.

Its subcellular location is the golgi apparatus. It localises to the cis-Golgi network membrane. The protein resides in the endoplasmic reticulum-Golgi intermediate compartment membrane. It is found in the cytoplasm. The protein localises to the cytoskeleton. Its subcellular location is the spindle pole. Peripheral membrane component of the cis-Golgi stack that acts as a membrane skeleton that maintains the structure of the Golgi apparatus, and as a vesicle thether that facilitates vesicle fusion to the Golgi membrane. Required for normal protein transport from the endoplasmic reticulum to the Golgi apparatus and the cell membrane. Together with p115/USO1 and STX5, involved in vesicle tethering and fusion at the cis-Golgi membrane to maintain the stacked and inter-connected structure of the Golgi apparatus. Plays a central role in mitotic Golgi disassembly: phosphorylation at Ser-37 by CDK1 at the onset of mitosis inhibits the interaction with p115/USO1, preventing tethering of COPI vesicles and thereby inhibiting transport through the Golgi apparatus during mitosis. Also plays a key role in spindle pole assembly and centrosome organization. Promotes the mitotic spindle pole assembly by activating the spindle assembly factor TPX2 to nucleate microtubules around the Golgi and capture them to couple mitotic membranes to the spindle: upon phosphorylation at the onset of mitosis, GOLGA2 interacts with importin-alpha via the nuclear localization signal region, leading to recruit importin-alpha to the Golgi membranes and liberate the spindle assembly factor TPX2 from importin-alpha. TPX2 then activates AURKA kinase and stimulates local microtubule nucleation. Upon filament assembly, nascent microtubules are further captured by GOLGA2, thus linking Golgi membranes to the spindle. Regulates the meiotic spindle pole assembly, probably via the same mechanism. Also regulates the centrosome organization. Also required for the Golgi ribbon formation and glycosylation of membrane and secretory proteins. This is Golgin subfamily A member 2 (GOLGA2) from Homo sapiens (Human).